Reading from the N-terminus, the 121-residue chain is Small ribosomal subunit protein uS13 (121 aa).

The tract at residues 96-121 (PVRGQNTKNNARTRKGKAVAIAGKKK) is disordered. The segment covering 106–121 (ARTRKGKAVAIAGKKK) has biased composition (basic residues).

This sequence belongs to the universal ribosomal protein uS13 family. As to quaternary structure, part of the 30S ribosomal subunit. Forms a loose heterodimer with protein S19. Forms two bridges to the 50S subunit in the 70S ribosome.

Its function is as follows. Located at the top of the head of the 30S subunit, it contacts several helices of the 16S rRNA. In the 70S ribosome it contacts the 23S rRNA (bridge B1a) and protein L5 of the 50S subunit (bridge B1b), connecting the 2 subunits; these bridges are implicated in subunit movement. Contacts the tRNAs in the A and P-sites. This Streptococcus suis (strain 05ZYH33) protein is Small ribosomal subunit protein uS13.